A 540-amino-acid chain; its full sequence is DEAD-box ATP-dependent RNA helicase 57 (540 aa).

Positions 24–73 are disordered; the sequence is DFARFRQGPPAPDVASAAAPSPEKKRKRQSKAKAKKSKKRRAEGADSASD. A compositionally biased stretch (basic residues) spans 47-64; the sequence is KKRKRQSKAKAKKSKKRR. Residues 101 to 129 are a coiled coil; that stretch reads KSEDSEVVRRRKEVEREIERAAILRKKFD. Residues 146 to 174 carry the Q motif motif; that stretch reads ELVSRYGCDSYLVGNLSKLGFQEPTPIQR. The region spanning 177 to 347 is the Helicase ATP-binding domain; sequence IPILLSGREC…RTIMHDAVRV (171 aa). 190 to 197 contributes to the ATP binding site; sequence APTGSGKT. Residues 294–297 carry the DEAD box motif; the sequence is DESD. Residues 375-519 enclose the Helicase C-terminal domain; that stretch reads ALRQSFAESL…EVPSWIKALP (145 aa).

Belongs to the DEAD box helicase family. DDX52/ROK1 subfamily.

It carries out the reaction ATP + H2O = ADP + phosphate + H(+). The sequence is that of DEAD-box ATP-dependent RNA helicase 57 from Oryza sativa subsp. japonica (Rice).